The following is a 169-amino-acid chain: NADH-quinone oxidoreductase subunit B (169 aa).

The [4Fe-4S] cluster site is built by Cys-45, Cys-46, Cys-111, and Cys-141.

The protein belongs to the complex I 20 kDa subunit family. In terms of assembly, NDH-1 is composed of 14 different subunits. Subunits NuoB, C, D, E, F, and G constitute the peripheral sector of the complex. Requires [4Fe-4S] cluster as cofactor.

Its subcellular location is the cell membrane. The enzyme catalyses a quinone + NADH + 5 H(+)(in) = a quinol + NAD(+) + 4 H(+)(out). In terms of biological role, NDH-1 shuttles electrons from NADH, via FMN and iron-sulfur (Fe-S) centers, to quinones in the respiratory chain. The immediate electron acceptor for the enzyme in this species is believed to be a menaquinone. Couples the redox reaction to proton translocation (for every two electrons transferred, four hydrogen ions are translocated across the cytoplasmic membrane), and thus conserves the redox energy in a proton gradient. The protein is NADH-quinone oxidoreductase subunit B of Clostridium beijerinckii (strain ATCC 51743 / NCIMB 8052) (Clostridium acetobutylicum).